Reading from the N-terminus, the 130-residue chain is RutC family protein slr0709 (130 aa).

The protein belongs to the RutC family.

The polypeptide is RutC family protein slr0709 (Synechocystis sp. (strain ATCC 27184 / PCC 6803 / Kazusa)).